Consider the following 95-residue polypeptide: Sec-independent protein translocase protein TatA (95 aa).

A helical membrane pass occupies residues 1–21 (MGGISIWQLLIIALIVVLLFG). Positions 50 to 61 (KALEDNAADKPA) are enriched in basic and acidic residues. Residues 50-95 (KALEDNAADKPAADAAKVTETAKVAETAPVAETAEKKAESKGKEQA) form a disordered region. Residues 62–81 (ADAAKVTETAKVAETAPVAE) are compositionally biased toward low complexity. Over residues 82-95 (TAEKKAESKGKEQA) the composition is skewed to basic and acidic residues.

It belongs to the TatA/E family. The Tat system comprises two distinct complexes: a TatABC complex, containing multiple copies of TatA, TatB and TatC subunits, and a separate TatA complex, containing only TatA subunits. Substrates initially bind to the TatABC complex, which probably triggers association of the separate TatA complex to form the active translocon.

It is found in the cell inner membrane. Its function is as follows. Part of the twin-arginine translocation (Tat) system that transports large folded proteins containing a characteristic twin-arginine motif in their signal peptide across membranes. TatA could form the protein-conducting channel of the Tat system. This Shewanella halifaxensis (strain HAW-EB4) protein is Sec-independent protein translocase protein TatA.